Consider the following 430-residue polypeptide: Adenylosuccinate synthetase (430 aa).

GTP contacts are provided by residues 17–23 (GDEGKGK) and 45–47 (GHT). D18 acts as the Proton acceptor in catalysis. Mg(2+) contacts are provided by D18 and G45. IMP is bound by residues 18–21 (DEGK), 43–46 (NAGH), T139, R153, N229, T244, and R308. Catalysis depends on H46, which acts as the Proton donor. Substrate is bound at residue 304–310 (TVTGRRR). GTP contacts are provided by residues R310, 336–338 (KLD), and 418–420 (GVG).

The protein belongs to the adenylosuccinate synthetase family. As to quaternary structure, homodimer. Mg(2+) serves as cofactor.

Its subcellular location is the cytoplasm. The enzyme catalyses IMP + L-aspartate + GTP = N(6)-(1,2-dicarboxyethyl)-AMP + GDP + phosphate + 2 H(+). The protein operates within purine metabolism; AMP biosynthesis via de novo pathway; AMP from IMP: step 1/2. In terms of biological role, plays an important role in the de novo pathway and in the salvage pathway of purine nucleotide biosynthesis. Catalyzes the first committed step in the biosynthesis of AMP from IMP. The polypeptide is Adenylosuccinate synthetase (Cryptococcus neoformans var. neoformans serotype D (strain B-3501A) (Filobasidiella neoformans)).